The sequence spans 377 residues: Prostaglandin E synthase 2 (377 aa).

At 1 to 65 the chain is on the lumenal side; the sequence is MAAACTRTLG…LAAPVRGSGR (65 aa). Residues 66–83 form a helical membrane-spanning segment; the sequence is VLGCAFLLGGGFGLYQTI. The region spanning 105–182 is the GST N-terminal domain; sequence LKLTLYQYKT…ALKTYISSKD (78 aa). Residues Val-153 and 166–167 contribute to the glutathione site; that span reads DS. The region spanning 266–377 is the GST C-terminal domain; the sequence is YIVREGKFGS…RMQKATQHVS (112 aa).

The protein belongs to the GST superfamily. In terms of assembly, homodimer.

The protein resides in the golgi apparatus membrane. The catalysed reaction is prostaglandin H2 = prostaglandin E2. It catalyses the reaction prostaglandin H2 = (12S)-hydroxy-(5Z,8E,10E)-heptadecatrienoate + malonaldehyde. It participates in lipid metabolism; prostaglandin biosynthesis. Isomerase activity is increased by sulfhydril compounds. Dithiothreitol (DTT) is most effective, followed by glutathione (GSH) and 2-mercaptoethanol. Isomerase that catalyzes the conversion of PGH2 into the more stable prostaglandin E2 (PGE2) (in vitro). The biological function and the GSH-dependent property of PTGES2 is still under debate. In vivo, PTGES2 could form a complex with GSH and heme and would not participate in PGE2 synthesis but would catalyze the degradation of prostaglandin E2 H2 (PGH2) to 12(S)-hydroxy-5(Z),8(E),10(E)-heptadecatrienoic acid (HHT) and malondialdehyde (MDA). The sequence is that of Prostaglandin E synthase 2 (ptges2) from Danio rerio (Zebrafish).